Reading from the N-terminus, the 306-residue chain is N(1)-aminopropylagmatine ureohydrolase (306 aa).

The Mn(2+) site is built by His-121, Asp-145, His-147, Asp-149, Asp-228, and Asp-230.

The protein belongs to the arginase family. Mn(2+) serves as cofactor.

It carries out the reaction N(1)-(3-aminopropyl)agmatine + H2O = urea + spermidine. It participates in amine and polyamine biosynthesis; spermidine biosynthesis. Ureohydrolase involved in the biosynthesis of spermidine via the carboxyaminopropylagmatine (CAPA) pathway. Catalyzes the conversion of aminopropylagmatine (APA) to spermidine and urea. Is highly specific to APA and incapable of releasing measurable urea from CAPA, agmatine, arginine, guanidine, guanidinobutyrate and guanidinopropionate. The protein is N(1)-aminopropylagmatine ureohydrolase of Synechocystis sp. (strain ATCC 27184 / PCC 6803 / Kazusa).